A 147-amino-acid polypeptide reads, in one-letter code: UPF0735 ACT domain-containing protein YszB (147 aa).

Positions T70–S145 constitute an ACT domain.

It belongs to the UPF0735 family.

The protein is UPF0735 ACT domain-containing protein YszB (yszB) of Bacillus subtilis (strain 168).